The chain runs to 527 residues: Bifunctional purine biosynthesis protein PurH (527 aa).

Residues Met1–Ala149 form the MGS-like domain.

Belongs to the PurH family.

The enzyme catalyses (6R)-10-formyltetrahydrofolate + 5-amino-1-(5-phospho-beta-D-ribosyl)imidazole-4-carboxamide = 5-formamido-1-(5-phospho-D-ribosyl)imidazole-4-carboxamide + (6S)-5,6,7,8-tetrahydrofolate. The catalysed reaction is IMP + H2O = 5-formamido-1-(5-phospho-D-ribosyl)imidazole-4-carboxamide. It participates in purine metabolism; IMP biosynthesis via de novo pathway; 5-formamido-1-(5-phospho-D-ribosyl)imidazole-4-carboxamide from 5-amino-1-(5-phospho-D-ribosyl)imidazole-4-carboxamide (10-formyl THF route): step 1/1. Its pathway is purine metabolism; IMP biosynthesis via de novo pathway; IMP from 5-formamido-1-(5-phospho-D-ribosyl)imidazole-4-carboxamide: step 1/1. The chain is Bifunctional purine biosynthesis protein PurH from Xanthomonas axonopodis pv. citri (strain 306).